The following is a 452-amino-acid chain: Pup--protein ligase (452 aa).

Glu9 is a Mg(2+) binding site. ATP is bound at residue Arg53. Tyr55 lines the Mg(2+) pocket. Asp57 serves as the catalytic Proton acceptor. Residue Glu63 coordinates Mg(2+). ATP is bound by residues Thr66 and Trp419.

This sequence belongs to the Pup ligase/Pup deamidase family. Pup-conjugating enzyme subfamily.

The catalysed reaction is ATP + [prokaryotic ubiquitin-like protein]-L-glutamate + [protein]-L-lysine = ADP + phosphate + N(6)-([prokaryotic ubiquitin-like protein]-gamma-L-glutamyl)-[protein]-L-lysine.. It functions in the pathway protein degradation; proteasomal Pup-dependent pathway. It participates in protein modification; protein pupylation. Catalyzes the covalent attachment of the prokaryotic ubiquitin-like protein modifier Pup to the proteasomal substrate proteins, thereby targeting them for proteasomal degradation. This tagging system is termed pupylation. The ligation reaction involves the side-chain carboxylate of the C-terminal glutamate of Pup and the side-chain amino group of a substrate lysine. In Saccharomonospora viridis (strain ATCC 15386 / DSM 43017 / JCM 3036 / CCUG 5913 / NBRC 12207 / NCIMB 9602 / P101) (Thermoactinomyces viridis), this protein is Pup--protein ligase.